We begin with the raw amino-acid sequence, 351 residues long: DNA polymerase IV (351 aa).

The UmuC domain maps to 4–185; the sequence is IIHVDMDCFF…LPLAKIPGVG (182 aa). The Mg(2+) site is built by Asp-8 and Asp-103. Glu-104 is a catalytic residue.

Belongs to the DNA polymerase type-Y family. In terms of assembly, monomer. Mg(2+) is required as a cofactor.

It is found in the cytoplasm. The enzyme catalyses DNA(n) + a 2'-deoxyribonucleoside 5'-triphosphate = DNA(n+1) + diphosphate. In terms of biological role, poorly processive, error-prone DNA polymerase involved in untargeted mutagenesis. Copies undamaged DNA at stalled replication forks, which arise in vivo from mismatched or misaligned primer ends. These misaligned primers can be extended by PolIV. Exhibits no 3'-5' exonuclease (proofreading) activity. May be involved in translesional synthesis, in conjunction with the beta clamp from PolIII. This Escherichia coli O1:K1 / APEC protein is DNA polymerase IV.